Reading from the N-terminus, the 362-residue chain is Very-long-chain (3R)-3-hydroxyacyl-CoA dehydratase (362 aa).

Residues 1–149 (MADCSLRPHV…DPFKHLKKGY (149 aa)) are Cytoplasmic-facing. Residues 5 to 94 (SLRPHVHWAQ…KESSWWERLT (90 aa)) enclose the CS domain. Residues 111 to 135 (LDESDAEMELKEKEEEKINKMKIES) adopt a coiled-coil conformation. The chain crosses the membrane as a helical span at residues 150-170 (LIMYNLVQFLGFSWIFVNMTV). Residues 171–189 (RLFILGKDSFYDTFHTIAD) are Lumenal-facing. Residues 190–210 (MMYFCQTLALMEILNSLIGLV) traverse the membrane as a helical segment. The Cytoplasmic portion of the chain corresponds to 211 to 212 (RS). The chain crosses the membrane as a helical span at residues 213–233 (PLIPAVIQVFGRNFILFVVLG). The Lumenal segment spans residues 234-242 (SLEEMQSKA). A helical membrane pass occupies residues 243 to 263 (VVFFLFYFWSIIELFRYPYYM). Over 264–282 (LSCMGIEWKPLTWLRYTSW) the chain is Cytoplasmic. Residues 283–303 (IPLYPLGGLAEAVCLIQSIPI) traverse the membrane as a helical segment. Residues Y286 and E293 contribute to the active site. The Lumenal portion of the chain corresponds to 304-319 (FSETGKFSLGLPNPLN). Residues 320–340 (VTIQFSFLLQMYLIALFLGLF) form a helical membrane-spanning segment. The Cytoplasmic portion of the chain corresponds to 341–362 (VNFRYLYKQRKQHLGPKKRKMK).

Belongs to the very long-chain fatty acids dehydratase HACD family.

The protein resides in the endoplasmic reticulum membrane. The catalysed reaction is a very-long-chain (3R)-3-hydroxyacyl-CoA = a very-long-chain (2E)-enoyl-CoA + H2O. It catalyses the reaction (3R)-hydroxyhexadecanoyl-CoA = (2E)-hexadecenoyl-CoA + H2O. The protein operates within lipid metabolism; fatty acid biosynthesis. Functionally, catalyzes the third of the four reactions of the long-chain fatty acids elongation cycle. This endoplasmic reticulum-bound enzymatic process, allows the addition of two carbons to the chain of long- and very long-chain fatty acids/VLCFAs per cycle. This enzyme catalyzes the dehydration of the 3-hydroxyacyl-CoA intermediate into trans-2,3-enoyl-CoA, within each cycle of fatty acid elongation. Thereby, it participates in the production of VLCFAs of different chain lengths that are involved in multiple biological processes as precursors of membrane lipids and lipid mediators. Involved in Rac1-signaling pathways leading to the modulation of gene expression. This Gallus gallus (Chicken) protein is Very-long-chain (3R)-3-hydroxyacyl-CoA dehydratase.